Here is a 704-residue protein sequence, read N- to C-terminus: Polyribonucleotide nucleotidyltransferase (704 aa).

Mg(2+) contacts are provided by D485 and D491. One can recognise a KH domain in the interval 552 to 611 (PRIYTMKIDPKKIKDVIGKGGATIRALTEETGTSIDIDDDGTVKIAAVDGNAVKTVMARI). The 69-residue stretch at 621–689 (GAVYTGKVTR…RQGRIRLTMR (69 aa)) folds into the S1 motif domain.

The protein belongs to the polyribonucleotide nucleotidyltransferase family. Component of the RNA degradosome, which is a multiprotein complex involved in RNA processing and mRNA degradation. Mg(2+) serves as cofactor.

The protein resides in the cytoplasm. It carries out the reaction RNA(n+1) + phosphate = RNA(n) + a ribonucleoside 5'-diphosphate. Involved in mRNA degradation. Catalyzes the phosphorolysis of single-stranded polyribonucleotides processively in the 3'- to 5'-direction. The polypeptide is Polyribonucleotide nucleotidyltransferase (Mannheimia succiniciproducens (strain KCTC 0769BP / MBEL55E)).